A 61-amino-acid polypeptide reads, in one-letter code: Short neurotoxin 1 (61 aa).

Cystine bridges form between C3–C23, C17–C40, C42–C53, and C54–C59.

Belongs to the three-finger toxin family. Short-chain subfamily. Type I alpha-neurotoxin sub-subfamily. As to expression, expressed by the venom gland.

The protein resides in the secreted. Its function is as follows. Binds to muscle nicotinic acetylcholine receptor (nAChR) and inhibit acetylcholine from binding to the receptor, thereby impairing neuromuscular transmission. This chain is Short neurotoxin 1, found in Naja annulata annulata (Banded water cobra).